The sequence spans 577 residues: Arginine--tRNA ligase (577 aa).

Residues 122-132 (PNVAKEMHVGH) carry the 'HIGH' region motif.

The protein belongs to the class-I aminoacyl-tRNA synthetase family. In terms of assembly, monomer.

It localises to the cytoplasm. It carries out the reaction tRNA(Arg) + L-arginine + ATP = L-arginyl-tRNA(Arg) + AMP + diphosphate. This chain is Arginine--tRNA ligase, found in Salmonella enteritidis PT4 (strain P125109).